The following is a 565-amino-acid chain: uncharacterized protein (565 aa).

5 helical membrane-spanning segments follow: residues 4 to 26 (FVQF…AVWV), 33 to 55 (GYGL…VGAA), 68 to 90 (SLLY…VNAL), 97 to 119 (YAIL…TQFF), and 162 to 184 (ISAM…IILL). 2 RCK C-terminal domains span residues 210 to 295 (PNVD…LGPE) and 296 to 379 (VPDA…IFGV). Transmembrane regions (helical) follow at residues 389–411 (LLTL…PAFG), 415–432 (GLGN…VSSI), 453–472 (LGLI…DLLT), 482–504 (IFIV…GFHI), and 539–561 (WLGF…YFAM).

Belongs to the AAE transporter (TC 2.A.81) family.

Its subcellular location is the cell membrane. This is an uncharacterized protein from Bordetella bronchiseptica (strain ATCC BAA-588 / NCTC 13252 / RB50) (Alcaligenes bronchisepticus).